Reading from the N-terminus, the 93-residue chain is Large ribosomal subunit protein uL23cz/uL23cy (93 aa).

This sequence belongs to the universal ribosomal protein uL23 family. As to quaternary structure, part of the 50S ribosomal subunit.

The protein resides in the plastid. Its subcellular location is the chloroplast. Functionally, binds to 23S rRNA. The chain is Large ribosomal subunit protein uL23cz/uL23cy (rpl23-A) from Nandina domestica (Heavenly bamboo).